Consider the following 410-residue polypeptide: Arginine deiminase (410 aa).

C400 serves as the catalytic Amidino-cysteine intermediate.

The protein belongs to the arginine deiminase family.

It localises to the cytoplasm. It catalyses the reaction L-arginine + H2O = L-citrulline + NH4(+). The protein operates within amino-acid degradation; L-arginine degradation via ADI pathway; carbamoyl phosphate from L-arginine: step 1/2. This is Arginine deiminase (arcA) from Borreliella burgdorferi (strain ATCC 35210 / DSM 4680 / CIP 102532 / B31) (Borrelia burgdorferi).